Consider the following 861-residue polypeptide: E3 ubiquitin-protein ligase SH3RF1 (861 aa).

The RING-type zinc-finger motif lies at 12-53 (CPVCLERLDASAKVLPCQHTFCKRCLLGIVSSRNELRCPECR). SH3 domains follow at residues 132 to 191 (PQLP…IIKP) and 194 to 257 (QPPP…FNSA). Residues 268–319 (SGVDTGEGSSGTTHSSNSQKQADAKKNTKKRHSFTSLTMSNKSSQSVQNRHS) are disordered. Low complexity predominate over residues 273–285 (GEGSSGTTHSSNS). A compositionally biased stretch (polar residues) spans 301–317 (FTSLTMSNKSSQSVQNR). In terms of domain architecture, SH3 3 spans 435-496 (TRPSVFVAIY…PGNYVAPVTR (62 aa)). Residues 684–731 (NSAANKQDKDSKKEKKGLLKLLSGASTKRKPRSSPPHSPTQELEQTNS) are disordered. The segment covering 689 to 700 (KQDKDSKKEKKG) has biased composition (basic and acidic residues). The SH3 4 domain occupies 802–861 (RPCERYRVVVSYPPQSEAELELKEGDIVFVHKKREDGWFKGTLQRNGKTGLFPGSFVENI).

Belongs to the SH3RF family. Post-translationally, autoubiquitinated. Ubiquitinated by SH3RF2, leading to proteasome-mediated degradation.

It is found in the cytoplasm. It localises to the perinuclear region. The protein localises to the cell projection. The protein resides in the lamellipodium. Its subcellular location is the golgi apparatus. It is found in the trans-Golgi network. It carries out the reaction S-ubiquitinyl-[E2 ubiquitin-conjugating enzyme]-L-cysteine + [acceptor protein]-L-lysine = [E2 ubiquitin-conjugating enzyme]-L-cysteine + N(6)-ubiquitinyl-[acceptor protein]-L-lysine.. It participates in protein modification; protein ubiquitination. Its function is as follows. Has E3 ubiquitin-protein ligase activity. In the absence of an external substrate, it can catalyze self-ubiquitination. Acts as a scaffold protein that contributes to the effective activation of the JNK signaling pathway. This is E3 ubiquitin-protein ligase SH3RF1 (sh3rf1) from Xenopus tropicalis (Western clawed frog).